The primary structure comprises 155 residues: UPF0305 protein MTH_811 (155 aa).

The protein belongs to the UPF0305 family.

The polypeptide is UPF0305 protein MTH_811 (Methanothermobacter thermautotrophicus (strain ATCC 29096 / DSM 1053 / JCM 10044 / NBRC 100330 / Delta H) (Methanobacterium thermoautotrophicum)).